Consider the following 219-residue polypeptide: GTP-binding protein Rit1 (219 aa).

GTP is bound by residues 28–35, 75–79, and 134–137; these read GAGGVGKS, DTAGQ, and NKSD.

Belongs to the small GTPase superfamily. Ras family. In terms of assembly, interacts with AFDN, the C-terminal domain of RALGDS and RLF, but not with RIN1 and PIK3CA. RLF binds exclusively to the active GTP-bound form. Strongly interacts with BRAF, but only weakly with RAF1. BARF and RAF1 association is dependent upon the GTP-bound state. Interacts with RGL3. As to expression, expressed in many tissues.

The protein localises to the cell membrane. The enzyme catalyses GTP + H2O = GDP + phosphate + H(+). With respect to regulation, alternates between an inactive form bound to GDP and an active form bound to GTP. Functionally, plays a crucial role in coupling NGF stimulation to the activation of both EPHB2 and MAPK14 signaling pathways and in NGF-dependent neuronal differentiation. Involved in ELK1 transactivation through the Ras-MAPK signaling cascade that mediates a wide variety of cellular functions, including cell proliferation, survival, and differentiation. This chain is GTP-binding protein Rit1 (Rit1), found in Mus musculus (Mouse).